The primary structure comprises 537 residues: Biotin carboxylase, chloroplastic (537 aa).

The transit peptide at 1–71 directs the protein to the chloroplast; sequence MDASMITNSK…ATSGGLGVTC (71 aa). ATP is bound by residues Lys188, Lys230, 236–237, 272–275, and His280; these read GG and EKFV. Residues 192–389 enclose the ATP-grasp domain; that stretch reads RETMKNAGVP…LIEEQIRVAM (198 aa). Lys309 provides a ligand contact to hydrogencarbonate. Residues Glu347 and Glu360 each coordinate ATP. Mg(2+) is bound by residues Glu347, Glu360, and Asn362. Mn(2+) is bound by residues Glu347, Glu360, and Asn362. 3 residues coordinate hydrogencarbonate: Arg364, Val367, and Arg410. The active site involves Arg364. Biotin is bound at residue Arg410.

As to quaternary structure, acetyl-CoA carboxylase is a heterohexamer composed of biotin carboxyl carrier protein, biotin carboxylase and two subunits each of ACCase subunit alpha and ACCase plastid-coded subunit beta (accD). Requires Mg(2+) as cofactor. Mn(2+) serves as cofactor. Accumulates in fatty acids synthesizing tissues. Mostly expressed in siliques, developing leaves, and flowers, present in roots and embryos (especially at torpedo stage), and, to a lower extent, in mature leaves.

The protein resides in the plastid. It is found in the chloroplast. It carries out the reaction N(6)-biotinyl-L-lysyl-[protein] + hydrogencarbonate + ATP = N(6)-carboxybiotinyl-L-lysyl-[protein] + ADP + phosphate + H(+). The protein operates within lipid metabolism; malonyl-CoA biosynthesis; malonyl-CoA from acetyl-CoA: step 1/1. This protein is a component of the acetyl coenzyme A carboxylase complex; first, biotin carboxylase catalyzes the carboxylation of the carrier protein and then the transcarboxylase transfers the carboxyl group to form malonyl-CoA. In Arabidopsis thaliana (Mouse-ear cress), this protein is Biotin carboxylase, chloroplastic (CAC2).